We begin with the raw amino-acid sequence, 1828 residues long: MMRNKDKSQEEDSSLHSNASSHSASEEASGSDSGSQSESEQGSDPGSGHGSESNSSSESSESQSESESESAGSKSQPVLPEAKEKPASKKERIADVKKMWEEYPDVYGVRRSNRSRQEPSRFNIKEEASSGSESGSPKRRGQRQLKKQEKWKQEPSEDEQEQGTSAESEPEQKKVKARRPVPRRTVPKPRVKKQPKTQRGKRKKQDSSDEDDDDDEAPKRQTRRRAAKNVSYKEDDDFETDSDDLIEMTGEGVDEQQDNSETIEKVLDSRLGKKGATGASTTVYAIEANGDPSGDFDTEKDEGEIQYLIKWKGWSYIHSTWESEESLQQQKVKGLKKLENFKKKEDEIKQWLGKVSPEDVEYFNCQQELASELNKQYQIVERVIAVKTSKSTLGQTDFPAHSRKPAPSNEPEYLCKWMGLPYSECSWEDEALIGKKFQNCIDSFHSRNNSKTIPTRECKALKQRPRFVALKKQPAYLGGENLELRDYQLEGLNWLAHSWCKNNSVILADEMGLGKTIQTISFLSYLFHQHQLYGPFLIVVPLSTLTSWQREFEIWAPEINVVVYIGDLMSRNTIREYEWIHSQTKRLKFNALITTYEILLKDKTVLGSINWAFLGVDEAHRLKNDDSLLYKTLIDFKSNHRLLITGTPLQNSLKELWSLLHFIMPEKFEFWEDFEEDHGKGRENGYQSLHKVLEPFLLRRVKKDVEKSLPAKVEQILRVEMSALQKQYYKWILTRNYKALAKGTRGSTSGFLNIVMELKKCCNHCYLIKPPEENERENGQEILLSLIRSSGKLILLDKLLTRLRERGNRVLIFSQMVRMLDILAEYLTIKHYPFQRLDGSIKGEIRKQALDHFNADGSEDFCFLLSTRAGGLGINLASADTVVIFDSDWNPQNDLQAQARAHRIGQKKQVNIYRLVTKGTVEEEIIERAKKKMVLDHLVIQRMDTTGRTILENNSGRSNSNPFNKEELTAILKFGAEDLFKELEGEESEPQEMDIDEILRLAETRENEVSTSATDELLSQFKVANFATMEDEEELEERPHKDWDEIIPEEQRKKVEEEERQKELEEIYMLPRIRSSTKKAQTNDSDSDTESKRQAQRSSASESETEDSDDDKKPKRRGRPRSVRKDLVEGFTDAEIRRFIKAYKKFGLPLERLECIARDAELVDKSVADLKRLGELIHNSCVSAMQEYEEQLKENASEGKGPGKRRGPTIKISGVQVNVKSIIQHEEEFEMLHKSIPVDPEEKKKYCLTCRVKAAHFDVEWGVEDDSRLLLGIYEHGYGNWELIKTDPELKLTDKILPVETDKKPQGKQLQTRADYLLKLLRKGLEKKGAVTGGEEAKLKKRKPRVKKENKVPRLKEEHGIELSSPRHSDNPSEEGEVKDDGLEKSPMKKKQKKKENKENKEKQMSSRKDKEGDKERKKSKDKKEKPKSGDAKSSSKSKRSQGPVHITAGSEPVPIGEDEDDDLDQETFSICKERMRPVKKALKQLDKPDKGLNVQEQLEHTRNCLLKIGDRIAECLKAYSDQEHIKLWRRNLWIFVSKFTEFDARKLHKLYKMAHKKRSQEEEEQKKKDDVTGGKKPFRPEASGSSRDSLISQSHTSHNLHPQKPHLPASHGPQMHGHPRDNYNHPNKRHFSNADRGDWQRERKFNYGGGNNNPPWGSDRHHQYEQHWYKDHHYGDRRHMDAHRSGSYRPNNMSRKRPYDQYSSDRDHRGHRDYYDRHHHDSKRRRSDEFRPQNYHQQDFRRMSDHRPAMGYHGQGPSDHYRSFHTDKLGEYKQPLPPLHPAVSDPRSPPSQKSPHDSKSPLDHRSPLERSLEQKNNPDYNWNVRKT.

Basic and acidic residues predominate over residues 1-14; that stretch reads MMRNKDKSQEEDSS. Positions 1-243 are disordered; that stretch reads MMRNKDKSQE…EDDDFETDSD (243 aa). The segment covering 15–75 has biased composition (low complexity); it reads LHSNASSHSA…SESESAGSKS (61 aa). Composition is skewed to basic and acidic residues over residues 81–101, 115–128, and 146–155; these read EAKE…KMWE, SRQE…KEEA, and KKQEKWKQEP. Positions 175-204 are enriched in basic residues; that stretch reads VKARRPVPRRTVPKPRVKKQPKTQRGKRKK. Phosphoserine is present on residues Ser207 and Ser208. The span at 234–243 shows a compositional bias: acidic residues; sequence EDDDFETDSD. Thr240 bears the Phosphothreonine mark. The residue at position 242 (Ser242) is a Phosphoserine. Chromo domains lie at 261–353 and 378–456; these read ETIE…QWLG and QIVE…IPTR. A Helicase ATP-binding domain is found at 496–666; it reads AHSWCKNNSV…WSLLHFIMPE (171 aa). 509 to 516 contacts ATP; sequence DEMGLGKT. The short motif at 617–620 is the DEAH box element; that stretch reads DEAH. Positions 795–946 constitute a Helicase C-terminal domain; sequence LLDKLLTRLR…HLVIQRMDTT (152 aa). 4 disordered regions span residues 1030–1124, 1331–1462, 1556–1638, and 1680–1828; these read EDEE…RSVR, VTGG…DEDD, HKKR…ADRG, and HMDA…VRKT. The segment covering 1037-1065 has biased composition (basic and acidic residues); the sequence is ERPHKDWDEIIPEEQRKKVEEEERQKELE. Residues Ser1085, Ser1087, Ser1365, and Ser1386 each carry the phosphoserine modification. A compositionally biased stretch (basic and acidic residues) spans 1347–1371; that stretch reads KKENKVPRLKEEHGIELSSPRHSDN. Basic and acidic residues-rich tracts occupy residues 1396–1431 and 1565–1574; these read ENKE…KSGD and EQKKKDDVTG. Residues 1464–1566 are CHD1 helical C-terminal domain (CHCT); sequence LDQETFSICK…KKRSQEEEEQ (103 aa). Polar residues predominate over residues 1584–1601; it reads SGSSRDSLISQSHTSHNL. Composition is skewed to basic and acidic residues over residues 1698–1720, 1739–1749, 1760–1772, and 1795–1814; these read RPYD…DRHH, QDFRRMSDHRP, DHYR…KLGE, and SPHD…RSLE. Position 1807 is a phosphoserine (Ser1807).

Belongs to the SNF2/RAD54 helicase family. As to quaternary structure, interacts with MYOD1. Interacts with histone H3.3.

The protein localises to the nucleus. It catalyses the reaction ATP + H2O = ADP + phosphate + H(+). Its function is as follows. ATP-dependent chromatin-remodeling factor that specifically binds to the promoter of target genes, leading to chromatin remodeling, possibly by promoting deposition of histone H3.3. Involved in myogenesis via interaction with MYOD1: binds to myogenic gene regulatory sequences and mediates incorporation of histone H3.3 prior to the onset of myogenic gene expression, promoting their expression. In Homo sapiens (Human), this protein is Chromodomain-helicase-DNA-binding protein 2 (CHD2).